Reading from the N-terminus, the 311-residue chain is Hevamine-A (311 aa).

The first 26 residues, 1-26, serve as a signal peptide directing secretion; it reads MAKRTQAILLLLLAISLIMSSSHVDG. The 276-residue stretch at 27-302 folds into the GH18 domain; sequence GGIAIYWGQN…SSILDSVLFL (276 aa). Disulfide bonds link Cys46/Cys93 and Cys76/Cys83. Glu153 functions as the Proton donor in the catalytic mechanism. A disulfide bond links Cys185 and Cys214. The propeptide at 300-311 is removed in mature form; sequence LFLHSEECMTVL.

The protein belongs to the glycosyl hydrolase 18 family. Chitinase class II subfamily.

The protein resides in the vacuole. The catalysed reaction is Random endo-hydrolysis of N-acetyl-beta-D-glucosaminide (1-&gt;4)-beta-linkages in chitin and chitodextrins.. It catalyses the reaction Hydrolysis of (1-&gt;4)-beta-linkages between N-acetylmuramic acid and N-acetyl-D-glucosamine residues in a peptidoglycan and between N-acetyl-D-glucosamine residues in chitodextrins.. Functionally, bifunctional enzyme with lysozyme / chitinase activity. May have a role in plugging the latex vessel and cessation of latex flow. This is Hevamine-A from Hevea brasiliensis (Para rubber tree).